Here is a 154-residue protein sequence, read N- to C-terminus: Endoribonuclease YbeY (154 aa).

The Zn(2+) site is built by His-113, His-117, and His-123.

It belongs to the endoribonuclease YbeY family. The cofactor is Zn(2+).

The protein resides in the cytoplasm. In terms of biological role, single strand-specific metallo-endoribonuclease involved in late-stage 70S ribosome quality control and in maturation of the 3' terminus of the 16S rRNA. This chain is Endoribonuclease YbeY, found in Vibrio cholerae serotype O1 (strain ATCC 39541 / Classical Ogawa 395 / O395).